The sequence spans 235 residues: Phosphoribosylaminoimidazole-succinocarboxamide synthase (235 aa).

The protein belongs to the SAICAR synthetase family.

It catalyses the reaction 5-amino-1-(5-phospho-D-ribosyl)imidazole-4-carboxylate + L-aspartate + ATP = (2S)-2-[5-amino-1-(5-phospho-beta-D-ribosyl)imidazole-4-carboxamido]succinate + ADP + phosphate + 2 H(+). It functions in the pathway purine metabolism; IMP biosynthesis via de novo pathway; 5-amino-1-(5-phospho-D-ribosyl)imidazole-4-carboxamide from 5-amino-1-(5-phospho-D-ribosyl)imidazole-4-carboxylate: step 1/2. This is Phosphoribosylaminoimidazole-succinocarboxamide synthase from Lachnoclostridium phytofermentans (strain ATCC 700394 / DSM 18823 / ISDg) (Clostridium phytofermentans).